The primary structure comprises 602 residues: Pyranose dehydrogenase 1 (602 aa).

An N-terminal signal peptide occupies residues 1–25 (MLPRVTKLNSRLLSLALLGIQIARG). Asn100 is a glycosylation site (N-linked (GlcNAc...) asparagine). His128 is modified (tele-8alpha-FAD histidine). 3 N-linked (GlcNAc...) asparagine glycosylation sites follow: Asn200, Asn277, and Asn344. The active-site Proton acceptor is the His537. His581 is a catalytic residue.

The protein belongs to the GMC oxidoreductase family. In terms of assembly, monomer. The cofactor is FAD. N-glycosylated.

The protein localises to the secreted. The catalysed reaction is pyranose + acceptor = pyranos-2-ulose + reduced acceptor.. The enzyme catalyses pyranose + acceptor = pyranos-3-ulose + reduced acceptor.. It carries out the reaction pyranose + acceptor = pyranos-2,3-diulose + reduced acceptor.. It catalyses the reaction a pyranoside + acceptor = a pyranosid-3-ulose + reduced acceptor.. The catalysed reaction is a pyranoside + acceptor = a pyranosid-3,4-diulose + reduced acceptor.. Functionally, catalyzes the single-oxidation or sequential double oxidation reaction of carbohydrates primarily at carbon-2 and/or carbon-3 with the concomitant reduction of the flavin. The enzyme exhibits a broad sugar substrate specificity, oxidizing different aldopyranoses to the corresponding C-1, C-2, C-3 or C-1,2, C-2,3 and C-3,4 (di)dehydro sugars with substrate-specific regioselectivity. Accepts only a narrow range of electron acceptors such as substituted benzoquinones and complexed metal ions and reacts extremely slowly with O(2) as acceptor. May play a role in the natural recycling of plant matter by oxidizing all major monosaccharides in lignocellulose and by reducing quinone compounds or reactive radical species generated during lignin depolymerization. The sequence is that of Pyranose dehydrogenase 1 from Leucoagaricus meleagris (Western flat-topped agaric).